A 270-amino-acid chain; its full sequence is Putative pyruvate, phosphate dikinase regulatory protein 2 (270 aa).

151–158 (GVSRTSKT) is an ADP binding site.

Belongs to the pyruvate, phosphate/water dikinase regulatory protein family. PDRP subfamily.

It carries out the reaction N(tele)-phospho-L-histidyl/L-threonyl-[pyruvate, phosphate dikinase] + ADP = N(tele)-phospho-L-histidyl/O-phospho-L-threonyl-[pyruvate, phosphate dikinase] + AMP + H(+). The enzyme catalyses N(tele)-phospho-L-histidyl/O-phospho-L-threonyl-[pyruvate, phosphate dikinase] + phosphate + H(+) = N(tele)-phospho-L-histidyl/L-threonyl-[pyruvate, phosphate dikinase] + diphosphate. In terms of biological role, bifunctional serine/threonine kinase and phosphorylase involved in the regulation of the pyruvate, phosphate dikinase (PPDK) by catalyzing its phosphorylation/dephosphorylation. This chain is Putative pyruvate, phosphate dikinase regulatory protein 2, found in Listeria innocua serovar 6a (strain ATCC BAA-680 / CLIP 11262).